A 568-amino-acid chain; its full sequence is Transport inhibitor response 1-like protein Os11g0515500 (568 aa).

An F-box domain is found at 1–45; it reads MVFFPEEVVEHILGFLASHRDRNAVSLVCREWYRVERLSRRSVLV. Residues Lys69, 103 to 104, and Arg335 each bind 1D-myo-inositol hexakisphosphate; that span reads KR. Residues 338–343 are interaction with auxin-responsive proteins; that stretch reads PANANA. 390–392 serves as a coordination point for 1D-myo-inositol hexakisphosphate; the sequence is SFR. An interaction with auxin-responsive proteins region spans residues 394–398; sequence CVLDP. A 1D-myo-inositol hexakisphosphate-binding site is contributed by Arg425. The segment at 453 to 454 is interaction with auxin-responsive proteins; the sequence is AF. Residues 473–474 and Arg498 contribute to the 1D-myo-inositol hexakisphosphate site; that span reads KK.

As to quaternary structure, part of a SCF (SKP1-cullin-F-box) protein ligase complex. May interact with auxin and auxin-responsive proteins.

It localises to the nucleus. The protein operates within protein modification; protein ubiquitination. This Oryza sativa subsp. japonica (Rice) protein is Transport inhibitor response 1-like protein Os11g0515500.